We begin with the raw amino-acid sequence, 172 residues long: Protein-export protein SecB (172 aa).

The tract at residues M1–S22 is disordered. Polar residues predominate over residues A7 to D20.

The protein belongs to the SecB family. As to quaternary structure, homotetramer, a dimer of dimers. One homotetramer interacts with 1 SecA dimer.

It localises to the cytoplasm. One of the proteins required for the normal export of preproteins out of the cell cytoplasm. It is a molecular chaperone that binds to a subset of precursor proteins, maintaining them in a translocation-competent state. It also specifically binds to its receptor SecA. The chain is Protein-export protein SecB from Sphingopyxis alaskensis (strain DSM 13593 / LMG 18877 / RB2256) (Sphingomonas alaskensis).